Reading from the N-terminus, the 635-residue chain is Sodium- and chloride-dependent creatine transporter 1 (635 aa).

Residues 1–11 show a composition bias toward polar residues; it reads MANKSTENGIY. The interval 1–27 is disordered; sequence MANKSTENGIYSVSGEEKKGPLIAPGP. The Cytoplasmic portion of the chain corresponds to 1 to 60; it reads MANKSTENGIYSVSGEEKKGPLIAPGPDGAPAKGDGPAALGAPGSLLAVPPRETWTRQMD. The chain crosses the membrane as a helical span at residues 61 to 81; it reads FIMSCVGFAVGLGNVWRFPYL. Topologically, residues 82–87 are extracellular; sequence CYKNGG. The chain crosses the membrane as a helical span at residues 88 to 108; it reads GVFLIPYILIALIGGIPIFFL. Residues 109 to 138 lie on the Cytoplasmic side of the membrane; it reads EISLGQFMKAGSINVWNICPLFKGLGYASM. The chain crosses the membrane as a helical span at residues 139–159; it reads VIVFYCNTYYIMVLAWGFYYL. At 160-230 the chain is on the extracellular side; that stretch reads VKSFTTTLPW…LSEGLEVPGA (71 aa). N-linked (GlcNAc...) asparagine glycans are attached at residues Asn192 and Asn197. A helical transmembrane segment spans residues 231-251; the sequence is LNWEVTLCLLTCWVLVYFCVW. The Cytoplasmic segment spans residues 252–269; the sequence is KGVKSTGKIVYFTATFPY. A helical transmembrane segment spans residues 270–290; the sequence is VVLVVLLVRGVLLPGALDGII. At 291-304 the chain is on the extracellular side; sequence YYLKPDWSKLASPQ. Residues 305–325 traverse the membrane as a helical segment; sequence VWIDAGTQIFFSYAIGLGALT. Over 326 to 341 the chain is Cytoplasmic; sequence ALGSYNRFNNNCYKDA. A helical membrane pass occupies residues 342-362; that stretch reads IILALINSGTSFFAGFVVFSI. The Extracellular segment spans residues 363 to 394; that stretch reads LGFMATEQGVHISKVAESGPGLAFIAYPRAVT. The chain crosses the membrane as a helical span at residues 395–415; that stretch reads LMPVAPLWAALFFFMLLLLGL. Residues 416–444 lie on the Cytoplasmic side of the membrane; sequence DSQFVGVEGFITGLLDLLPASYYFRFQRE. A helical transmembrane segment spans residues 445 to 465; that stretch reads ISVALCCTICFVIDLSMVTDG. The Extracellular portion of the chain corresponds to 466–479; sequence GMYVFQLFDYYSAS. The chain crosses the membrane as a helical span at residues 480–500; sequence GTTLLWQAFWECVVVAWVYGA. Topologically, residues 501–520 are cytoplasmic; it reads DRFMDDVACMIGYRPCPWMK. The helical transmembrane segment at 521–541 threads the bilayer; it reads WCWSFFTPLVCMGIFIFNVVY. The Extracellular portion of the chain corresponds to 542–560; it reads HEPLVYNNTYVYPWWGEAV. Asn548 carries N-linked (GlcNAc...) asparagine glycosylation. Residues 561 to 581 form a helical membrane-spanning segment; sequence GWAFALSSMLCVPLHLLGCLL. The Cytoplasmic segment spans residues 582-635; sequence RAKGTMAERWQHLTQPIWGLHHLEYRAQDSDVRGLTTLTPVSESSKVVVVESVM. 2 positions are modified to phosphothreonine: Thr617 and Thr620. Ser623 carries the post-translational modification Phosphoserine.

It belongs to the sodium:neurotransmitter symporter (SNF) (TC 2.A.22) family. SLC6A8 subfamily. In terms of processing, glycosylated.

The protein resides in the cell membrane. Its subcellular location is the apical cell membrane. The catalysed reaction is creatine(out) + chloride(out) + 2 Na(+)(out) = creatine(in) + chloride(in) + 2 Na(+)(in). Functionally, creatine:sodium symporter which mediates the uptake of creatine. Plays an important role in supplying creatine to the brain via the blood-brain barrier. This is Sodium- and chloride-dependent creatine transporter 1 (SLC6A8) from Bos taurus (Bovine).